The sequence spans 670 residues: MSERTEQESYTDKIDEDEILAGLSAEELKQLQSEMDDIAPDERVPVGLRQKDASHEMTVRDCTEPESEEEIDEDEILAGLSAEELKQLQSEMEEIAPDERVPVGMRQRDQTDKPPTGSFDHRSLVEYLYWEKESKRMLEEERVPTTLLPSQKTNEEHEAKNEDKVEELELVYEEIVEEVEGGQGDAVVDEVIEEVIMEVEEEDKVCDKPVKTDLDATDPTVTSEDGLQRPSESADANVEAKTDQSGLDTETKVNEEKKEDSTEPAPSSYENWVPEKEERVISKLKIPKLALGGNTFVKKTARPSGNETNLESTLDKIRNNNPSVTDVNLNNIENIPKEMLLDYVNSLKKNRHVKTFSIANTGADENVAFTLANMLKENRSITTLNIESNFITGKGIVAIIRCLQFNETLTELRFHNQRHMLGHHAEMEVSRLLKANNTLLKMGYHFELPGPRMVVTNLLTRNLDRQRQQRMEEQKLQQMKEQRKVMEMYEDSLNLPPGMLEMLGGYIPLSLLQNCQNGAEDIPEDSPEPSPQPSPPHQLCKTQHLAPQQHPPNLSTGNLFEEVQLKKTPKRRDPLLEWNQCDERKDGRPNVHLRSVPKKRSIAREGPVDERANLKDMIKTLKPVPRRREPPKVDLTPRDHLLSEIRQSNVAYLKAVPLPKILESQETSLF.

4 disordered regions span residues 34–72 (EMDDIAPDERVPVGLRQKDASHEMTVRDCTEPESEEEID), 94–120 (EIAPDERVPVGMRQRDQTDKPPTGSFD), 139–165 (EEERVPTTLLPSQKTNEEHEAKNEDKV), and 202–274 (EDKV…NWVP). Composition is skewed to basic and acidic residues over residues 40-63 (PDERVPVGLRQKDASHEMTVRDCT), 97-112 (PDERVPVGMRQRDQTD), 153-163 (TNEEHEAKNED), 205-214 (VCDKPVKTDL), and 249-261 (TETKVNEEKKEDS). Positions 150-183 (SQKTNEEHEAKNEDKVEELELVYEEIVEEVEGGQ) form a coiled coil. The stretch at 464 to 494 (DRQRQQRMEEQKLQQMKEQRKVMEMYEDSLN) forms a coiled coil. Positions 517-556 (NGAEDIPEDSPEPSPQPSPPHQLCKTQHLAPQQHPPNLST) are disordered. Positions 637 to 656 (PRDHLLSEIRQSNVAYLKAV) constitute a WH2 domain.

It belongs to the tropomodulin family. As to expression, expressed in muscle (at protein level).

The protein resides in the cytoplasm. It is found in the myofibril. The protein localises to the sarcomere. Its subcellular location is the a band. It localises to the m line. The protein resides in the cytoskeleton. Functionally, essential for the organization of sarcomeric thin filaments in skeletal muscle. The chain is Leiomodin-3 from Danio rerio (Zebrafish).